Reading from the N-terminus, the 89-residue chain is Large ribosomal subunit protein bL27 (89 aa).

The disordered stretch occupies residues 1–26; sequence MATKKAGGSSKNGRDSAGRRLGLKKS.

It belongs to the bacterial ribosomal protein bL27 family.

This Orientia tsutsugamushi (strain Ikeda) (Rickettsia tsutsugamushi) protein is Large ribosomal subunit protein bL27.